The sequence spans 227 residues: ATP synthase F(0) complex subunit a (227 aa).

Helical transmembrane passes span 14–34, 69–89, 99–119, 137–157, 180–200, and 202–222; these read LLGI…FPTP, WATI…LGLL, LSLN…IGML, LLIP…PLAL, FVLI…LFLL, and ILEV…LSLY.

Belongs to the ATPase A chain family. In terms of assembly, component of the ATP synthase complex composed at least of ATP5F1A/subunit alpha, ATP5F1B/subunit beta, ATP5MC1/subunit c (homooctomer), MT-ATP6/subunit a, MT-ATP8/subunit 8, ATP5ME/subunit e, ATP5MF/subunit f, ATP5MG/subunit g, ATP5MK/subunit k, ATP5MJ/subunit j, ATP5F1C/subunit gamma, ATP5F1D/subunit delta, ATP5F1E/subunit epsilon, ATP5PF/subunit F6, ATP5PB/subunit b, ATP5PD/subunit d, ATP5PO/subunit OSCP. ATP synthase complex consists of a soluble F(1) head domain (subunits alpha(3) and beta(3)) - the catalytic core - and a membrane F(0) domain - the membrane proton channel (subunits c, a, 8, e, f, g, k and j). These two domains are linked by a central stalk (subunits gamma, delta, and epsilon) rotating inside the F1 region and a stationary peripheral stalk (subunits F6, b, d, and OSCP). Interacts with DNAJC30; interaction is direct.

It is found in the mitochondrion inner membrane. It catalyses the reaction H(+)(in) = H(+)(out). Subunit a, of the mitochondrial membrane ATP synthase complex (F(1)F(0) ATP synthase or Complex V) that produces ATP from ADP in the presence of a proton gradient across the membrane which is generated by electron transport complexes of the respiratory chain. ATP synthase complex consist of a soluble F(1) head domain - the catalytic core - and a membrane F(1) domain - the membrane proton channel. These two domains are linked by a central stalk rotating inside the F(1) region and a stationary peripheral stalk. During catalysis, ATP synthesis in the catalytic domain of F(1) is coupled via a rotary mechanism of the central stalk subunits to proton translocation. With the subunit c (ATP5MC1), forms the proton-conducting channel in the F(0) domain, that contains two crucial half-channels (inlet and outlet) that facilitate proton movement from the mitochondrial intermembrane space (IMS) into the matrix. Protons are taken up via the inlet half-channel and released through the outlet half-channel, following a Grotthuss mechanism. This chain is ATP synthase F(0) complex subunit a, found in Squalus acanthias (Spiny dogfish).